The chain runs to 366 residues: Chorismate synthase (366 aa).

Residues arginine 48 and arginine 54 each coordinate NADP(+). FMN is bound by residues 125–127 (RSS), 241–242 (NA), glycine 285, 300–304 (KPTSS), and arginine 326.

It belongs to the chorismate synthase family. Homotetramer. It depends on FMNH2 as a cofactor.

The catalysed reaction is 5-O-(1-carboxyvinyl)-3-phosphoshikimate = chorismate + phosphate. The protein operates within metabolic intermediate biosynthesis; chorismate biosynthesis; chorismate from D-erythrose 4-phosphate and phosphoenolpyruvate: step 7/7. Functionally, catalyzes the anti-1,4-elimination of the C-3 phosphate and the C-6 proR hydrogen from 5-enolpyruvylshikimate-3-phosphate (EPSP) to yield chorismate, which is the branch point compound that serves as the starting substrate for the three terminal pathways of aromatic amino acid biosynthesis. This reaction introduces a second double bond into the aromatic ring system. The protein is Chorismate synthase of Cereibacter sphaeroides (strain ATCC 17023 / DSM 158 / JCM 6121 / CCUG 31486 / LMG 2827 / NBRC 12203 / NCIMB 8253 / ATH 2.4.1.) (Rhodobacter sphaeroides).